Here is a 377-residue protein sequence, read N- to C-terminus: Dihydroorotate dehydrogenase (quinone) (377 aa).

FMN-binding positions include 78–82 (AGCDK) and alanine 102. Substrate is bound at residue lysine 82. 127-130 (NRLG) contacts substrate. FMN contacts are provided by asparagine 159 and asparagine 192. Asparagine 192 is a binding site for substrate. The active-site Nucleophile is serine 195. Residue asparagine 197 participates in substrate binding. Residues lysine 230 and threonine 258 each coordinate FMN. Position 259-260 (259-260 (NT)) interacts with substrate. FMN is bound by residues glycine 288, glycine 317, and 338-339 (YT).

Belongs to the dihydroorotate dehydrogenase family. Type 2 subfamily. Monomer. It depends on FMN as a cofactor.

It is found in the cell membrane. The catalysed reaction is (S)-dihydroorotate + a quinone = orotate + a quinol. Its pathway is pyrimidine metabolism; UMP biosynthesis via de novo pathway; orotate from (S)-dihydroorotate (quinone route): step 1/1. Catalyzes the conversion of dihydroorotate to orotate with quinone as electron acceptor. This is Dihydroorotate dehydrogenase (quinone) from Rippkaea orientalis (strain PCC 8801 / RF-1) (Cyanothece sp. (strain PCC 8801)).